A 208-amino-acid polypeptide reads, in one-letter code: Guanylate kinase (208 aa).

The region spanning 8-187 is the Guanylate kinase-like domain; sequence GVCLVISAPS…AISQARSVLT (180 aa). 15-22 provides a ligand contact to ATP; that stretch reads APSGAGKS.

The protein belongs to the guanylate kinase family.

Its subcellular location is the cytoplasm. The catalysed reaction is GMP + ATP = GDP + ADP. Essential for recycling GMP and indirectly, cGMP. The protein is Guanylate kinase of Gluconobacter oxydans (strain 621H) (Gluconobacter suboxydans).